We begin with the raw amino-acid sequence, 332 residues long: Ferredoxin--NADP reductase (332 aa).

Asp-33, Gln-41, Tyr-46, Ala-86, Ile-121, Asp-282, and Ser-325 together coordinate FAD.

It belongs to the ferredoxin--NADP reductase type 2 family. As to quaternary structure, homodimer. FAD is required as a cofactor.

The catalysed reaction is 2 reduced [2Fe-2S]-[ferredoxin] + NADP(+) + H(+) = 2 oxidized [2Fe-2S]-[ferredoxin] + NADPH. This is Ferredoxin--NADP reductase from Metallosphaera sedula (strain ATCC 51363 / DSM 5348 / JCM 9185 / NBRC 15509 / TH2).